Reading from the N-terminus, the 630-residue chain is Biosynthetic arginine decarboxylase (630 aa).

At Lys99 the chain carries N6-(pyridoxal phosphate)lysine. 281 to 291 (VDIGGGLGVDY) is a substrate binding site.

Belongs to the Orn/Lys/Arg decarboxylase class-II family. SpeA subfamily. Mg(2+) is required as a cofactor. The cofactor is pyridoxal 5'-phosphate.

It catalyses the reaction L-arginine + H(+) = agmatine + CO2. Its function is as follows. Catalyzes the biosynthesis of agmatine from arginine. This Bacteroides thetaiotaomicron (strain ATCC 29148 / DSM 2079 / JCM 5827 / CCUG 10774 / NCTC 10582 / VPI-5482 / E50) protein is Biosynthetic arginine decarboxylase.